Here is a 529-residue protein sequence, read N- to C-terminus: MAAIPSHNNLLTINHKNSITGSSSLNTNFSEINFPAKFRVATRALSRTDESSLSAVISRLERERRERQGLLIEEAEGAGELWMTAEDIRRRDKKTEEERRLRDTWRKIQGEDDWAGLMDPMDPILRSELIRYGEMAQACYDAFDFDPASKYCGTSRFTRLEFFDSLGMIDSGYEVARYLYATSNINLPNFFSKSRWSKVWSKNANWMGYVAVSDDETSRNRLGRRDIAIAWRGTVTKLEWIADLKDYLKPVTENKIRCPDPAVKVESGFLDLYTDKDTTCKFARFSAREQILTEVKRLVEEHGDDDDSDLSITVTGHSLGGALAILSAYDIAEMRLNRSKKGKVIPVTVLTYGGPRVGNVRFRERMEELGVKVMRVVNVHDVVPKSPGLFLNESRPHALMKIAEGLPWCYSHVGEELALDHQNSPFLKPSVDVSTAHNLEAMLHLLDGYHGKGERFVLSSGRDHALVNKASDFLKEHLQIPPFWRQDANKGMVRNSEGRWIQAERLRFEDHHSPDIHHHLSQLRLDHPC.

Residues 1 to 43 (MAAIPSHNNLLTINHKNSITGSSSLNTNFSEINFPAKFRVATR) constitute a chloroplast transit peptide. The GXSXG signature appears at 316-320 (GHSLG). Ser318 serves as the catalytic Acyl-ester intermediate. Active-site charge relay system residues include Asp381 and His437.

Belongs to the AB hydrolase superfamily. Lipase family. In terms of assembly, interacts with SBP1. As to expression, widely expressed. Highly expressed in leaves and stems.

It localises to the plastid. The protein localises to the chloroplast. It catalyses the reaction 1,2-dihexadecanoyl-sn-glycero-3-phosphocholine + H2O = 2-hexadecanoyl-sn-glycero-3-phosphocholine + hexadecanoate + H(+). It carries out the reaction a 1,2-diacyl-3-O-(beta-D-galactosyl)-sn-glycerol + H2O = an acyl-3-O-(beta-D-galactosyl)-sn-glycerol + a fatty acid + H(+). The catalysed reaction is a 1,2-diacyl-3-O-[alpha-D-galactosyl-(1-&gt;6)-beta-D-galactosyl]-sn-glycerol + H2O = acyl-3-O-[alpha-D-galactosyl-(1-&gt;6)-beta-D-galactosyl]-sn-glycerol + a fatty acid + H(+). The enzyme catalyses a triacylglycerol + H2O = a diacylglycerol + a fatty acid + H(+). Acylhydrolase with broad specificity. Catalyzes the hydrolysis of phosphatidylcholine at the sn-1 position. Possesses moderate activity toward phosphatidylcholine (PC), monogalactosyldiacylglycerol (MGDG), digalactosyldiacylglycerol (DGDG) and triacylglycerol (TAG). In Arabidopsis thaliana (Mouse-ear cress), this protein is Phospholipase A1-Igamma2, chloroplastic.